The sequence spans 103 residues: Mitochondrial import inner membrane translocase subunit TIM13 (103 aa).

Positions 1–25 (MALSSIFGGGSPSQQSNLPTSSASS) are disordered. Polar residues predominate over residues 12-25 (PSQQSNLPTSSASS). The Twin CX3C motif motif lies at 55-75 (CFEKCLMAPYTSKQDTCVDQC). Cystine bridges form between Cys-55–Cys-75 and Cys-59–Cys-71.

This sequence belongs to the small Tim family. In terms of assembly, heterohexamer; composed of 3 copies of TIM8 and 3 copies of TIM13, named soluble 70 kDa complex. Associates with the TIM22 complex, whose core is composed of TIM22 and TIM54. Interacts with the transmembrane regions of multi-pass transmembrane proteins in transit.

It localises to the mitochondrion inner membrane. In terms of biological role, mitochondrial intermembrane chaperone that participates in the import and insertion of some multi-pass transmembrane proteins into the mitochondrial inner membrane. Also required for the transfer of beta-barrel precursors from the TOM complex to the sorting and assembly machinery (SAM complex) of the outer membrane. Acts as a chaperone-like protein that protects the hydrophobic precursors from aggregation and guide them through the mitochondrial intermembrane space. The TIM8-TIM13 complex is non essential and only mediates the import of few proteins, while the predominant TIM9-TIM10 70 kDa complex is crucial and mediates the import of much more proteins. This Eremothecium gossypii (strain ATCC 10895 / CBS 109.51 / FGSC 9923 / NRRL Y-1056) (Yeast) protein is Mitochondrial import inner membrane translocase subunit TIM13 (TIM13).